The chain runs to 276 residues: Undecaprenyl-diphosphatase (276 aa).

8 consecutive transmembrane segments (helical) span residues 1–21 (MHWL…FLPV), 41–61 (LLLD…VFFA), 97–117 (ALLI…FHKI), 121–141 (LFAS…LLWA), 155–175 (VTWG…LPGI), 200–220 (FLLS…DASA), 231–251 (LGGI…LAIV), and 256–276 (LWWF…ANFV).

It belongs to the UppP family.

It localises to the cell inner membrane. It catalyses the reaction di-trans,octa-cis-undecaprenyl diphosphate + H2O = di-trans,octa-cis-undecaprenyl phosphate + phosphate + H(+). Functionally, catalyzes the dephosphorylation of undecaprenyl diphosphate (UPP). Confers resistance to bacitracin. The chain is Undecaprenyl-diphosphatase from Desulfatibacillum aliphaticivorans.